Consider the following 371-residue polypeptide: N-acetyldiaminopimelate deacetylase (371 aa).

Residue D68 is part of the active site. E127 acts as the Proton acceptor in catalysis.

It belongs to the peptidase M20A family. N-acetyldiaminopimelate deacetylase subfamily.

It catalyses the reaction N-acetyl-(2S,6S)-2,6-diaminopimelate + H2O = (2S,6S)-2,6-diaminopimelate + acetate. It participates in amino-acid biosynthesis; L-lysine biosynthesis via DAP pathway; LL-2,6-diaminopimelate from (S)-tetrahydrodipicolinate (acetylase route): step 3/3. Its function is as follows. Catalyzes the conversion of N-acetyl-diaminopimelate to diaminopimelate and acetate. This is N-acetyldiaminopimelate deacetylase from Oceanobacillus iheyensis (strain DSM 14371 / CIP 107618 / JCM 11309 / KCTC 3954 / HTE831).